The sequence spans 213 residues: Ras-like protein rasU (213 aa).

21-28 (GDGGVGKT) is a GTP binding site. Residues 43–51 (YDPTIEDLY) carry the Effector region motif. GTP-binding positions include 68-72 (DTAGQ) and 126-129 (NKSD). Cysteine 210 carries the post-translational modification Cysteine methyl ester. Cysteine 210 carries the S-geranylgeranyl cysteine lipid modification. Positions 211–213 (KMI) are cleaved as a propeptide — removed in mature form.

Belongs to the small GTPase superfamily. Ras family.

The protein resides in the cell membrane. It carries out the reaction GTP + H2O = GDP + phosphate + H(+). In terms of biological role, ras proteins bind GDP/GTP and possess intrinsic GTPase activity. This Dictyostelium discoideum (Social amoeba) protein is Ras-like protein rasU (rasU).